The chain runs to 285 residues: Probable fructose-bisphosphate aldolase (285 aa).

S50 contacts D-glyceraldehyde 3-phosphate. D85 acts as the Proton donor in catalysis. H86, D107, E137, and H181 together coordinate Zn(2+). Position 182 (G182) interacts with dihydroxyacetone phosphate. H209 is a Zn(2+) binding site. Dihydroxyacetone phosphate contacts are provided by residues 210–212 and 231–234; these read GGT and NVNT. 2 positions are modified to phosphothreonine: T212 and T234.

This sequence belongs to the class II fructose-bisphosphate aldolase family. The cofactor is Zn(2+). Phosphorylated during sporulation.

It carries out the reaction beta-D-fructose 1,6-bisphosphate = D-glyceraldehyde 3-phosphate + dihydroxyacetone phosphate. It participates in carbohydrate degradation; glycolysis; D-glyceraldehyde 3-phosphate and glycerone phosphate from D-glucose: step 4/4. In terms of biological role, catalyzes the aldol condensation of dihydroxyacetone phosphate (DHAP or glycerone-phosphate) with glyceraldehyde 3-phosphate (G3P) to form fructose 1,6-bisphosphate (FBP) in gluconeogenesis and the reverse reaction in glycolysis. The protein is Probable fructose-bisphosphate aldolase (fbaA) of Bacillus subtilis (strain 168).